A 440-amino-acid chain; its full sequence is MFLAQEIIRKKRDGHALSDEEIRFFINGIRDNTISEGQIAALAMTIFFHDMTMPERVSLTMAMRDSGTVLDWKSLNLNGPIVDKHSTGGVGDVTSLMLGPMVAACGGYVPMISGRGLGHTGGTLDKLEAIPGFDIFPDDNRFREIIQDVGVAIIGQTSSLAPADKRFYATRDITATVDSIPLITGSILAKKLAEGLDALVMDVKVGSGAFMPTYELSKALAEAIVGVANGAGVRTTALLTDMNQVLASSAGNAVEVREAVQFLTGEYRNPRLFDVTMALCVEMLISGQLAKDDAEARAKLQAVLDNGKAAEVFGRMVAAQKGPSDFVENYDKYLPTAMLSKAVYADTEGFISAMDTRALGMAVVSMGGGRRQASDTIDYSVGFTDMARLGDSIDGQRPLAVIHAKDEASWQEAAKAVKAAIILDDKAPASTPSVYRRITE.

Belongs to the thymidine/pyrimidine-nucleoside phosphorylase family. In terms of assembly, homodimer.

It carries out the reaction thymidine + phosphate = 2-deoxy-alpha-D-ribose 1-phosphate + thymine. It functions in the pathway pyrimidine metabolism; dTMP biosynthesis via salvage pathway; dTMP from thymine: step 1/2. Its function is as follows. The enzymes which catalyze the reversible phosphorolysis of pyrimidine nucleosides are involved in the degradation of these compounds and in their utilization as carbon and energy sources, or in the rescue of pyrimidine bases for nucleotide synthesis. The chain is Thymidine phosphorylase from Salmonella heidelberg (strain SL476).